The following is a 250-amino-acid chain: Insertion sequence IS232 putative ATP-binding protein (250 aa).

An ATP-binding site is contributed by 108–115 (GPSGVGKT).

It belongs to the IS21/IS1162 putative ATP-binding protein family.

The protein is Insertion sequence IS232 putative ATP-binding protein of Bacillus thuringiensis subsp. berliner.